The following is a 204-amino-acid chain: MNTQPLRVGIGGPVGSGKTALTLALCQALRDRYNLAVVTNDIYTQEDAQFLVRNEALAPERIIGVETGGCPHTAIREDASINLEAVEQLNRRFPGLDLIIVESGGDNLSATFSPELSDLTIYVIDVSAGDKLPRKGGPGICKSDLLVINKIDLAPMVGASLEVMDRDARKMRGERPFVFSNQKVGQGLEEIISFIEKQGMLSAA.

12–19 (GPVGSGKT) lines the GTP pocket.

The protein belongs to the SIMIBI class G3E GTPase family. UreG subfamily. As to quaternary structure, homodimer. UreD, UreF and UreG form a complex that acts as a GTP-hydrolysis-dependent molecular chaperone, activating the urease apoprotein by helping to assemble the nickel containing metallocenter of UreC. The UreE protein probably delivers the nickel.

It is found in the cytoplasm. Facilitates the functional incorporation of the urease nickel metallocenter. This process requires GTP hydrolysis, probably effectuated by UreG. This chain is Urease accessory protein UreG, found in Stutzerimonas stutzeri (strain A1501) (Pseudomonas stutzeri).